A 287-amino-acid polypeptide reads, in one-letter code: Ribosomal RNA small subunit methyltransferase I (287 aa).

It belongs to the methyltransferase superfamily. RsmI family.

It localises to the cytoplasm. It catalyses the reaction cytidine(1402) in 16S rRNA + S-adenosyl-L-methionine = 2'-O-methylcytidine(1402) in 16S rRNA + S-adenosyl-L-homocysteine + H(+). In terms of biological role, catalyzes the 2'-O-methylation of the ribose of cytidine 1402 (C1402) in 16S rRNA. The chain is Ribosomal RNA small subunit methyltransferase I from Streptococcus pyogenes serotype M18 (strain MGAS8232).